An 876-amino-acid chain; its full sequence is Alanine--tRNA ligase (876 aa).

Positions 565, 569, 667, and 671 each coordinate Zn(2+).

Belongs to the class-II aminoacyl-tRNA synthetase family. Requires Zn(2+) as cofactor.

It localises to the cytoplasm. It catalyses the reaction tRNA(Ala) + L-alanine + ATP = L-alanyl-tRNA(Ala) + AMP + diphosphate. Functionally, catalyzes the attachment of alanine to tRNA(Ala) in a two-step reaction: alanine is first activated by ATP to form Ala-AMP and then transferred to the acceptor end of tRNA(Ala). Also edits incorrectly charged Ser-tRNA(Ala) and Gly-tRNA(Ala) via its editing domain. In Staphylococcus aureus (strain Mu3 / ATCC 700698), this protein is Alanine--tRNA ligase.